We begin with the raw amino-acid sequence, 169 residues long: Disulfide bond formation protein B 1 (169 aa).

Residues 1 to 14 (MSEETIRLGRERRY) lie on the Cytoplasmic side of the membrane. A helical transmembrane segment spans residues 15 to 31 (LVLLGIICLALIGGALY). Topologically, residues 32–49 (MQIVLGEAPCPLCILQRY) are periplasmic. A disulfide bond links cysteine 41 and cysteine 44. The helical transmembrane segment at 50–64 (ALLLIALFAFIGAAM) threads the bilayer. The Cytoplasmic segment spans residues 65–71 (RTRRSIT). Residues 72–89 (VFEVLVVICAIAGAGVAG) traverse the membrane as a helical segment. Residues 90-144 (HHVYTQFYPAVSCGIDVLQPIVDDLPLAKIFPLGFQVDGFCSTPYPPILGLSLAQ) lie on the Periplasmic side of the membrane. An intrachain disulfide couples cysteine 102 to cysteine 130. The helical transmembrane segment at 145–163 (WALVAFVLVVILVPLLTSR) threads the bilayer. Over 164–169 (NRKALR) the chain is Cytoplasmic.

The protein belongs to the DsbB family.

The protein localises to the cell inner membrane. Its function is as follows. Required for disulfide bond formation in some periplasmic proteins. Acts by oxidizing the DsbA protein. The protein is Disulfide bond formation protein B 1 of Pseudomonas fluorescens (strain Pf0-1).